We begin with the raw amino-acid sequence, 959 residues long: MMS19 nucleotide excision repair protein (959 aa).

HEAT repeat units follow at residues Gln-794 to Gln-828, Lys-832 to Thr-871, Gln-874 to Phe-915, and Leu-918 to Pro-956.

The protein belongs to the MET18/MMS19 family. Component of the CIA complex. Interacts with Xpd and galla-2. Binds to microtubules. As to expression, expressed in embryos (at protein level).

It is found in the cytoplasm. Its subcellular location is the cytoskeleton. The protein resides in the spindle. It localises to the nucleus. The protein localises to the midbody. In terms of biological role, key component of the cytosolic iron-sulfur protein assembly (CIA) complex, a multiprotein complex that mediates the incorporation of iron-sulfur cluster into apoproteins specifically involved in DNA metabolism and genomic integrity. In the CIA complex, MMS19 acts as an adapter between early-acting CIA components and a subset of cellular target iron-sulfur proteins. Essential for diploid cell cycles, organ growth and development. Regulates mitosis by binding to Xpd and thereby competing with the Xpd-mediated repression on the Cdk-activating kinase (CAK) complex. Regulates the centrosomal localization of the MT regulator tacc, a downstream target of aurA kinase. Binds to microtubules (MT). Regulates spindle and astral MT growth, MT stability and bundling. In neuroblasts, necessary for timely and coordinated spindle assembly and orientation which is necessary for mitotic progression. In young embryos, the maternal protein is important for progression through mitosis. The chain is MMS19 nucleotide excision repair protein from Drosophila melanogaster (Fruit fly).